The primary structure comprises 168 residues: Plastocyanin B, chloroplastic (168 aa).

The transit peptide at 1–69 (MAAVTSAAVS…SAMIASNAMA (69 aa)) directs the protein to the chloroplast. Positions 70–168 (VDVLLGADDG…AGMVGKVIVN (99 aa)) constitute a Plastocyanin-like domain. 4 residues coordinate Cu cation: His106, Cys153, His156, and Met161.

Belongs to the plastocyanin family. It depends on Cu(2+) as a cofactor.

It localises to the plastid. The protein resides in the chloroplast thylakoid membrane. Functionally, participates in electron transfer between P700 and the cytochrome b6-f complex in photosystem I. The sequence is that of Plastocyanin B, chloroplastic (PETE) from Populus nigra (Lombardy poplar).